Reading from the N-terminus, the 375-residue chain is Queuine tRNA-ribosyltransferase (375 aa).

Aspartate 89 (proton acceptor) is an active-site residue. Substrate is bound by residues 89–93, aspartate 143, glutamine 187, and glycine 214; that span reads DSGGF. The tract at residues 245–251 is RNA binding; sequence GVGKPED. Catalysis depends on aspartate 264, which acts as the Nucleophile. An RNA binding; important for wobble base 34 recognition region spans residues 269 to 273; that stretch reads TRNAR. The Zn(2+) site is built by cysteine 302, cysteine 304, cysteine 307, and histidine 333.

The protein belongs to the queuine tRNA-ribosyltransferase family. Homodimer. Within each dimer, one monomer is responsible for RNA recognition and catalysis, while the other monomer binds to the replacement base PreQ1. Zn(2+) is required as a cofactor.

It carries out the reaction 7-aminomethyl-7-carbaguanine + guanosine(34) in tRNA = 7-aminomethyl-7-carbaguanosine(34) in tRNA + guanine. The protein operates within tRNA modification; tRNA-queuosine biosynthesis. Functionally, catalyzes the base-exchange of a guanine (G) residue with the queuine precursor 7-aminomethyl-7-deazaguanine (PreQ1) at position 34 (anticodon wobble position) in tRNAs with GU(N) anticodons (tRNA-Asp, -Asn, -His and -Tyr). Catalysis occurs through a double-displacement mechanism. The nucleophile active site attacks the C1' of nucleotide 34 to detach the guanine base from the RNA, forming a covalent enzyme-RNA intermediate. The proton acceptor active site deprotonates the incoming PreQ1, allowing a nucleophilic attack on the C1' of the ribose to form the product. After dissociation, two additional enzymatic reactions on the tRNA convert PreQ1 to queuine (Q), resulting in the hypermodified nucleoside queuosine (7-(((4,5-cis-dihydroxy-2-cyclopenten-1-yl)amino)methyl)-7-deazaguanosine). This Salmonella choleraesuis (strain SC-B67) protein is Queuine tRNA-ribosyltransferase.